Reading from the N-terminus, the 391-residue chain is Na(+)/H(+) antiporter NhaA (391 aa).

Transmembrane regions (helical) follow at residues 14-34 (AGGI…NSPL), 59-79 (LIHW…GLEV), 95-115 (SLPT…YLIF), 124-144 (VGWA…MALL), 154-174 (VFLL…IALF), 177-197 (TDLS…LIGL), 213-233 (LILW…GVII), 261-281 (FIIL…GMSL), 292-312 (IALG…YIAV), 331-351 (VAVM…LAFV), and 363-383 (LGIL…LSKV).

This sequence belongs to the NhaA Na(+)/H(+) (TC 2.A.33) antiporter family.

Its subcellular location is the cell inner membrane. The catalysed reaction is Na(+)(in) + 2 H(+)(out) = Na(+)(out) + 2 H(+)(in). Its function is as follows. Na(+)/H(+) antiporter that extrudes sodium in exchange for external protons. The chain is Na(+)/H(+) antiporter NhaA from Shewanella pealeana (strain ATCC 700345 / ANG-SQ1).